Reading from the N-terminus, the 117-residue chain is Large ribosomal subunit protein bL19 (117 aa).

This sequence belongs to the bacterial ribosomal protein bL19 family.

In terms of biological role, this protein is located at the 30S-50S ribosomal subunit interface and may play a role in the structure and function of the aminoacyl-tRNA binding site. The protein is Large ribosomal subunit protein bL19 of Desulfosudis oleivorans (strain DSM 6200 / JCM 39069 / Hxd3) (Desulfococcus oleovorans).